A 614-amino-acid chain; its full sequence is Protein YehQ (614 aa).

SWIM-type zinc fingers lie at residues 55-89 (VRTQ…LSYQ) and 151-185 (SDVR…QAFV).

This chain is Protein YehQ (yehQ), found in Escherichia coli (strain K12).